A 278-amino-acid polypeptide reads, in one-letter code: Orotidine 5'-phosphate decarboxylase (278 aa).

The active-site Proton donor is K96.

The protein belongs to the OMP decarboxylase family. Type 2 subfamily.

The enzyme catalyses orotidine 5'-phosphate + H(+) = UMP + CO2. Its pathway is pyrimidine metabolism; UMP biosynthesis via de novo pathway; UMP from orotate: step 2/2. This is Orotidine 5'-phosphate decarboxylase from Salinispora tropica (strain ATCC BAA-916 / DSM 44818 / JCM 13857 / NBRC 105044 / CNB-440).